The primary structure comprises 200 residues: Large ribosomal subunit protein bL25 (200 aa).

It belongs to the bacterial ribosomal protein bL25 family. CTC subfamily. As to quaternary structure, part of the 50S ribosomal subunit; part of the 5S rRNA/L5/L18/L25 subcomplex. Contacts the 5S rRNA. Binds to the 5S rRNA independently of L5 and L18.

This is one of the proteins that binds to the 5S RNA in the ribosome where it forms part of the central protuberance. This chain is Large ribosomal subunit protein bL25, found in Pseudomonas fluorescens (strain Pf0-1).